The chain runs to 199 residues: UPF0462 protein C4orf33 (199 aa).

Belongs to the UPF0462 family.

The chain is UPF0462 protein C4orf33 (C4orf33) from Homo sapiens (Human).